A 122-amino-acid chain; its full sequence is Probable dihydroneopterin aldolase (122 aa).

Substrate is bound by residues E21, Y54, and 73–74; that span reads LE. K101 (proton donor/acceptor) is an active-site residue.

It belongs to the DHNA family.

The enzyme catalyses 7,8-dihydroneopterin = 6-hydroxymethyl-7,8-dihydropterin + glycolaldehyde. It functions in the pathway cofactor biosynthesis; tetrahydrofolate biosynthesis; 2-amino-4-hydroxy-6-hydroxymethyl-7,8-dihydropteridine diphosphate from 7,8-dihydroneopterin triphosphate: step 3/4. Its function is as follows. Catalyzes the conversion of 7,8-dihydroneopterin to 6-hydroxymethyl-7,8-dihydropterin. This Chlamydia muridarum (strain MoPn / Nigg) protein is Probable dihydroneopterin aldolase (folB).